The chain runs to 513 residues: Catalase (513 aa).

An N-terminal signal peptide occupies residues 1 to 30 (MNPSLNAFRPGRLLVAASLTASLLSLSVQA). Active-site residues include His-81 and Asn-153. Heme is bound at residue Tyr-361. Positions 391 to 407 (DGALNAGHSTSGVNYQP) are enriched in polar residues. A disordered region spans residues 391-413 (DGALNAGHSTSGVNYQPSRLDPR).

This sequence belongs to the catalase family. The cofactor is heme.

It localises to the periplasm. It catalyses the reaction 2 H2O2 = O2 + 2 H2O. Functionally, decomposes hydrogen peroxide into water and oxygen; serves to protect cells from the toxic effects of hydrogen peroxide. The polypeptide is Catalase (katB) (Pseudomonas aeruginosa (strain ATCC 15692 / DSM 22644 / CIP 104116 / JCM 14847 / LMG 12228 / 1C / PRS 101 / PAO1)).